Here is a 124-residue protein sequence, read N- to C-terminus: Small ribosomal subunit protein uS12 (124 aa).

Positions 1 to 32 (MPTINQLVRKGRRDKTAKVKTAALKGSPQRRG) are disordered. Asp-89 bears the 3-methylthioaspartic acid mark. The segment at 104-124 (TQGVKGRKQARSRYGAKKEKS) is disordered. Positions 108-118 (KGRKQARSRYG) are enriched in basic residues.

This sequence belongs to the universal ribosomal protein uS12 family. As to quaternary structure, part of the 30S ribosomal subunit. Contacts proteins S8 and S17. May interact with IF1 in the 30S initiation complex.

Functionally, with S4 and S5 plays an important role in translational accuracy. In terms of biological role, interacts with and stabilizes bases of the 16S rRNA that are involved in tRNA selection in the A site and with the mRNA backbone. Located at the interface of the 30S and 50S subunits, it traverses the body of the 30S subunit contacting proteins on the other side and probably holding the rRNA structure together. The combined cluster of proteins S8, S12 and S17 appears to hold together the shoulder and platform of the 30S subunit. This is Small ribosomal subunit protein uS12 from Rhodococcus erythropolis (strain PR4 / NBRC 100887).